The following is a 561-amino-acid chain: Tectonic-like complex member MKS1 (561 aa).

Residues 314–442 (LRLFVNGEVV…TVSTWRPMEL (129 aa)) form the C2 B9-type domain.

As to quaternary structure, part of the tectonic-like complex (also named B9 complex). Interacts with TMEM107. Interacts with TCTN3, AHI1, TCTN1, TCTN2, CC2D2A. Interacts with FLNA. Interacts with TMEM67. Interacts with B9D1 and B9D2. In terms of tissue distribution, widely expressed in embryo at 15.5 dpc, with a relatively strong expression in brain, liver, kidney and digits of the upper limbs. Highly expressed in bronchiolar epithelium.

The protein resides in the cytoplasm. Its subcellular location is the cytoskeleton. It localises to the cilium basal body. It is found in the microtubule organizing center. The protein localises to the centrosome. Its function is as follows. Component of the tectonic-like complex, a complex localized at the transition zone of primary cilia and acting as a barrier that prevents diffusion of transmembrane proteins between the cilia and plasma membranes. Involved in centrosome migration to the apical cell surface during early ciliogenesis. Required for ciliary structure and function, including a role in regulating length and appropriate number through modulating centrosome duplication. Required for cell branching morphology. This Mus musculus (Mouse) protein is Tectonic-like complex member MKS1 (Mks1).